We begin with the raw amino-acid sequence, 735 residues long: Glycogen [starch] synthase, muscle (735 aa).

A Phosphoserine; by AMPK and PKA modification is found at Ser-8. Ser-11 carries the post-translational modification Phosphoserine. A UDP-binding site is contributed by Lys-39. Positions 205 and 211 each coordinate UDP-alpha-D-glucose. Alpha-D-glucose 6-phosphate contacts are provided by His-291, Glu-292, Gln-294, His-297, and Lys-301. Arg-331 contacts UDP. Position 331 (Arg-331) interacts with UDP-alpha-D-glucose. Ser-412 carries the post-translational modification Phosphoserine. His-501 contributes to the alpha-D-glucose 6-phosphate binding site. Residues Glu-510, Trp-512, and Gly-513 each coordinate UDP-alpha-D-glucose. Thr-515 lines the UDP pocket. Arg-582 and Arg-586 together coordinate alpha-D-glucose 6-phosphate. The disordered stretch occupies residues 629–735 (DATQGYRYPR…PASSLGEERN (107 aa)). Position 641 is a phosphoserine; by DYRK2, GSK3-alpha, GSK3-beta and PASK (Ser-641). Phosphoserine; by GSK3-alpha and GSK3-beta is present on residues Ser-645 and Ser-649. Phosphoserine is present on Ser-652. Phosphoserine; by GSK3-alpha and GSK3-beta is present on Ser-653. Phosphoserine; by CK2 is present on Ser-657. Acidic residues predominate over residues 658-681 (EDEEEPRDGLPEEDGERYDEDEEA). Residues 682–695 (AKDRRNIRAPEWPR) show a composition bias toward basic and acidic residues. Ser-698 carries the post-translational modification Phosphoserine. Over residues 698 to 735 (SCTSSSGGSKRSNSVDTSSLSTPSEPLSPASSLGEERN) the composition is skewed to low complexity. Thr-700 carries the post-translational modification Phosphothreonine. Residues Ser-709 and Ser-711 each carry the phosphoserine modification. Phosphothreonine is present on Thr-719. Ser-725 and Ser-729 each carry phosphoserine.

Belongs to the glycosyltransferase 3 family. As to quaternary structure, part of the GYS1-GYG1 complex, a heterooctamer composed of a tetramer of GYS1 and 2 dimers of GYG1, where each GYS1 protomer binds to one GYG1 subunit (via GYG1 C-terminus); the GYS1 tetramer may dissociate from GYG1 dimers to continue glycogen polymerization on its own. In terms of processing, phosphorylation at Ser-8 is required for modification of Ser-11 by casein kinase I. Phosphorylated at Ser-641 by PASK, leading to inactivation; phosphorylation by PASK is inhibited by glycogen. Dephosphorylation at Ser-641 and Ser-645 by PP1 activates the enzyme. Phosphorylation at Ser-8 by AMPK inactivates the enzyme activity. Phosphorylated at Ser-641 by DYRK2, leading to inactivation. Primed phosphorylation at Ser-657 (site 5) by CSNK2A1 and CSNK2A2 is required for inhibitory phosphorylation at Ser-641 (site 3a), Ser-645 (site 3b), Ser-649 (site 3c) and Ser-653 (site 4) by GSK3A and GSK3B.

It carries out the reaction [(1-&gt;4)-alpha-D-glucosyl](n) + UDP-alpha-D-glucose = [(1-&gt;4)-alpha-D-glucosyl](n+1) + UDP + H(+). It functions in the pathway glycan biosynthesis; glycogen biosynthesis. Allosteric activation by glucose-6-phosphate. Phosphorylation reduces the activity towards UDP-glucose. When in the non-phosphorylated state, glycogen synthase does not require glucose-6-phosphate as an allosteric activator; when phosphorylated it does. Functionally, glycogen synthase participates in the glycogen biosynthetic process along with glycogenin and glycogen branching enzyme. Extends the primer composed of a few glucose units formed by glycogenin by adding new glucose units to it. In this context, glycogen synthase transfers the glycosyl residue from UDP-Glc to the non-reducing end of alpha-1,4-glucan. The protein is Glycogen [starch] synthase, muscle of Oryctolagus cuniculus (Rabbit).